An 85-amino-acid polypeptide reads, in one-letter code: F1845 adhesin operon regulatory protein (85 aa).

In terms of biological role, regulates the transcription of genes involved in the biosynthesis of F1845 fimbrial adhesin. In Escherichia coli, this protein is F1845 adhesin operon regulatory protein (daaA).